The primary structure comprises 187 residues: Protein GrpE (187 aa).

The span at 1 to 15 shows a compositional bias: basic and acidic residues; sequence MKETKQEEMEVREDC. Positions 1-40 are disordered; the sequence is MKETKQEEMEVREDCESVDSNLEATVEEMESTKGTSEDLE.

It belongs to the GrpE family. As to quaternary structure, homodimer.

It is found in the cytoplasm. Participates actively in the response to hyperosmotic and heat shock by preventing the aggregation of stress-denatured proteins, in association with DnaK and GrpE. It is the nucleotide exchange factor for DnaK and may function as a thermosensor. Unfolded proteins bind initially to DnaJ; upon interaction with the DnaJ-bound protein, DnaK hydrolyzes its bound ATP, resulting in the formation of a stable complex. GrpE releases ADP from DnaK; ATP binding to DnaK triggers the release of the substrate protein, thus completing the reaction cycle. Several rounds of ATP-dependent interactions between DnaJ, DnaK and GrpE are required for fully efficient folding. The sequence is that of Protein GrpE from Alkaliphilus oremlandii (strain OhILAs) (Clostridium oremlandii (strain OhILAs)).